A 453-amino-acid chain; its full sequence is MELLNKKILVVGLARTGVAVARFLAARGARVTVTDMKDEAALAPLMEQLADLDIDYELGRHERHSFLMADLVVVSPGVPMDIKPLLLAKAQRRTVISEIELAARFLTAPLVAITGTNGKTTTTTLTGEIFAACGFKTFVGGNIGNPLIELVTSGEAVDRVVVELSSFQLEGIIDFRPQVAVLLNITEDHLDRYATYQEYIDAKLRIFENQTSADYAVLNMDDPLVAAYAGKMKARVVPTSQRQELAQGIFYRNGSIVYRWEGREELFATASFRLKGVHNIDNIMAALASTLLMGCDAGQALAALEAFAGLPHRMEFVREVNGVAWYEDSKGTNVGSVVKSLESFDSGITLIAGGKDKGGEYTPLAGLVKERVGHLILIGEAKERMCNALGSLTDTHLADTLEDAVALAHRLTSPGGVVLFSPACSSFDMFKNYEERGECFKSLVRSLDDGAGR.

115–121 (GTNGKTT) serves as a coordination point for ATP.

It belongs to the MurCDEF family.

It localises to the cytoplasm. It carries out the reaction UDP-N-acetyl-alpha-D-muramoyl-L-alanine + D-glutamate + ATP = UDP-N-acetyl-alpha-D-muramoyl-L-alanyl-D-glutamate + ADP + phosphate + H(+). The protein operates within cell wall biogenesis; peptidoglycan biosynthesis. Cell wall formation. Catalyzes the addition of glutamate to the nucleotide precursor UDP-N-acetylmuramoyl-L-alanine (UMA). The sequence is that of UDP-N-acetylmuramoylalanine--D-glutamate ligase from Geotalea uraniireducens (strain Rf4) (Geobacter uraniireducens).